The primary structure comprises 298 residues: CCR4-NOT transcription complex subunit 9 (298 aa).

This sequence belongs to the CNOT9 family. In terms of assembly, homodimer. Component of the CCR4-NOT complex.

It is found in the nucleus. The protein localises to the cytoplasm. Its subcellular location is the P-body. Functionally, component of the CCR4-NOT complex which is one of the major cellular mRNA deadenylases and is linked to various cellular processes including bulk mRNA degradation, miRNA-mediated repression, translational repression during translational initiation and general transcription regulation. Additional complex functions may be a consequence of its influence on mRNA expression. Involved in down-regulation of MYB- and JUN-dependent transcription. Enhances ligand-dependent transcriptional activity of nuclear hormone receptors. May play a role in cell differentiation. The chain is CCR4-NOT transcription complex subunit 9 from Danio rerio (Zebrafish).